The following is a 323-amino-acid chain: Sphingolipid delta(4)-desaturase/C4-monooxygenase DES2 (323 aa).

G2 is lipidated: N-myristoyl glycine. 2 helical membrane passes run 45–65 and 68–88; these read WAVL…RGLA and WLLF…TLAI. Positions 89–93 match the Histidine box-1 motif; it reads HDISH. The segment at 95–99 is required for C4-hydroxylase activity; sequence AAFGT. Residues 128-132 carry the Histidine box-2 motif; the sequence is HVDHH. Residues 210-231 form a helical membrane-spanning segment; sequence VYLLASSFLGLGLHPISGHFVA. The Histidine box-3 signature appears at 259 to 263; sequence HVEHH.

The protein belongs to the fatty acid desaturase type 1 family. DEGS subfamily. In terms of tissue distribution, highly expressed in skin, intestine and kidney.

Its subcellular location is the endoplasmic reticulum membrane. The catalysed reaction is a dihydroceramide + 2 Fe(II)-[cytochrome b5] + O2 + 2 H(+) = a phytoceramide + 2 Fe(III)-[cytochrome b5] + H2O. It carries out the reaction an N-acylsphinganine + 2 Fe(II)-[cytochrome b5] + O2 + 2 H(+) = an N-acylsphing-4-enine + 2 Fe(III)-[cytochrome b5] + 2 H2O. It catalyses the reaction N-octanoylsphinganine + 2 Fe(II)-[cytochrome b5] + O2 + 2 H(+) = N-octanoyl-4-hydroxysphinganine + 2 Fe(III)-[cytochrome b5] + H2O. The enzyme catalyses an N-acylsphinganine + 2 Fe(II)-[cytochrome b5] + O2 + 2 H(+) = an N-acyl-(4R)-4-hydroxysphinganine + 2 Fe(III)-[cytochrome b5] + H2O. Its pathway is membrane lipid metabolism; sphingolipid biosynthesis. Bifunctional enzyme which acts both as a sphingolipid delta(4)-desaturase and a sphingolipid C4-monooxygenase. This is Sphingolipid delta(4)-desaturase/C4-monooxygenase DES2 from Homo sapiens (Human).